Consider the following 300-residue polypeptide: Glycine--tRNA ligase alpha subunit (300 aa).

Belongs to the class-II aminoacyl-tRNA synthetase family. In terms of assembly, tetramer of two alpha and two beta subunits.

The protein localises to the cytoplasm. It catalyses the reaction tRNA(Gly) + glycine + ATP = glycyl-tRNA(Gly) + AMP + diphosphate. The sequence is that of Glycine--tRNA ligase alpha subunit from Pseudoalteromonas translucida (strain TAC 125).